The sequence spans 603 residues: DNA mismatch repair protein MutL (603 aa).

Over residues 336 to 346 the composition is skewed to basic and acidic residues; sequence EVSKKQKEQQK. Disordered stretches follow at residues 336-355 and 361-384; these read EVSK…MSFE and KETP…DTSR.

This sequence belongs to the DNA mismatch repair MutL/HexB family.

This protein is involved in the repair of mismatches in DNA. It is required for dam-dependent methyl-directed DNA mismatch repair. May act as a 'molecular matchmaker', a protein that promotes the formation of a stable complex between two or more DNA-binding proteins in an ATP-dependent manner without itself being part of a final effector complex. The protein is DNA mismatch repair protein MutL of Listeria welshimeri serovar 6b (strain ATCC 35897 / DSM 20650 / CCUG 15529 / CIP 8149 / NCTC 11857 / SLCC 5334 / V8).